Consider the following 83-residue polypeptide: Cell division topological specificity factor (83 aa).

It belongs to the MinE family.

Its function is as follows. Prevents the cell division inhibition by proteins MinC and MinD at internal division sites while permitting inhibition at polar sites. This ensures cell division at the proper site by restricting the formation of a division septum at the midpoint of the long axis of the cell. The chain is Cell division topological specificity factor from Buchnera aphidicola subsp. Baizongia pistaciae (strain Bp).